The chain runs to 864 residues: MSDSGPQLDSMGSLTMKSQLQITVISAKLKENKKNWFGPSPYVEVTVDGQSKKTEKCNNTNSPKWKQPLTVIVTPTSKLCFRVWSHQTLKSDVLLGTAGLDIYETLKSNNMKLEEVVMTLQLVGDKEPTETMGDLSVCLDGLQVEAEVVTNGETSCSESTTQNDDGCRTRDDTRVSTNGSEDPEVAASGENKRANGNNSPSLSNGGFKPSRPPRPSRPPPPTPRRPASVNGSPSTNSDSDGSSTGSLPPTNTNVNTSTSEGATSGLIIPLTISGGSGPRPLNTVSQAPLPPGWEQRVDQHGRVYYVDHVEKRTTWDRPEPLPPGWERRVDNMGRIYYVDHFTRTTTWQRPTLESVRNYEQWQLQRSQLQGAMQQFNQRFIYGNQDLFATSQNKEFDPLGPLPPGWEKRTDSNGRVYFVNHNTRITQWEDPRSQGQLNEKPLPEGWEMRFTVDGIPYFVDHNRRATTYIDPRTGKSALDNGPQIAYVRDFKAKVQYFRFWCQQLAMPQHIKITVTRKTLFEDSFQQIMSFSPQDLRRRLWVIFPGEEGLDYGGVAREWFFLLSHEVLNPMYCLFEYAGKDNYCLQINPASYINPDHLKYFRFIGRFIAMALFHGKFIDTGFSLPFYKRILNKPVGLKDLESIDPEFYNSLIWVKENNIEECGLEMYFSVDKEILGEIKSHDLKPNGGNILVTEENKEEYIRMVAEWRLSRGVEEQTQAFFEGFNEILPQQYLQYFDAKELEVLLCGMQEIDLNDWQRHAIYRHYTRTSKQIMWFWQFVKEIDNEKRMRLLQFVTGTCRLPVGGFADLMGSNGPQKFCIEKVGKENWLPRSHTCFNRLDLPPYKSYEQLKEKLLFAIEETEGFGQE.

The C2 domain occupies 1–115; sequence MSDSGPQLDS…LKSNNMKLEE (115 aa). The residue at position 2 (S2) is an N-acetylserine. Over residues 151 to 164 the composition is skewed to polar residues; that stretch reads NGETSCSESTTQND. A disordered region spans residues 151–294; it reads NGETSCSEST…SQAPLPPGWE (144 aa). A compositionally biased stretch (basic and acidic residues) spans 165–174; sequence DGCRTRDDTR. Positions 195–206 are enriched in low complexity; that stretch reads NGNNSPSLSNGG. S199 is subject to Phosphoserine; by MAPK8. Over residues 210–224 the composition is skewed to pro residues; sequence SRPPRPSRPPPPTPR. A Phosphothreonine; by MAPK8 modification is found at T222. Residues 230 to 259 are compositionally biased toward low complexity; it reads NGSPSTNSDSDGSSTGSLPPTNTNVNTSTS. S232 is subject to Phosphoserine; by MAPK8. WW domains are found at residues 287-320 and 319-352; these read APLP…RPEP and EPLP…RPTL. The residue at position 346 (T346) is a Phosphothreonine; by SGK3. The required for interaction with FYN stretch occupies residues 356–432; the sequence is RNYEQWQLQR…RITQWEDPRS (77 aa). Y381 carries the phosphotyrosine; by FYN modification. WW domains follow at residues 399-432 and 439-472; these read GPLP…DPRS and KPLP…DPRT. Position 411 is a phosphoserine; by SGK3 (S411). Residues 530 to 864 form the HECT domain; sequence SPQDLRRRLW…IEETEGFGQE (335 aa). An MAP kinase docking site region spans residues 535-544; sequence RRRLWVIFPG. Residue C832 is the Glycyl thioester intermediate of the active site.

Monomer. Part of a ternary complex composed of SMAD3, ITCH/AIP4 and NEDD9/HEF1; within the complex NEDD9/HEF1 interacts (via N-terminus) with ITCH/AIP4 (via WW domains); the complex mediates ubiquitination and proteasomal degradation of NEDD9/HEF1. Interacts (via WW domains) with OCNL. Interacts (via WW domains) with NOTCH1. Interacts (via WW domains) JUN. Interacts with JUNB; the interaction promotes ITCH-mediated ubiquitination and degradation of JUNB. Interacts with FYN; the interaction phosphorylates ITCH on Tyr-381 decreasing binding of JUNB. Interacts (via WW domain 2) with N4BP1; the interaction inhibits the E3 ubiquitin-protein ligase activity. Interacts with NDFIP1 and NDFIP2; the interaction with NDFIP proteins activates the E3 ubiquitin-protein ligase and may induce its recruitment to exosomes. Interacts with ARHGEF7. Interacts with RNF11. Interacts (via the WW 1 domain) with NFE2 (via the PXY motif 1); the interaction promotes 'Lys-63'-linked ubiquitination of NFE2, retains it in the cytoplasm and prevents its transactivation activity. Interacts (via WW domains) with CXCR4 (via C-terminus); the interaction depends on CXCR4 phosphorylation. Found in a complex with E3 ligase DTX3L and ESCRT-0 components HGS and STAM. Interacts with DTX3L (via C-terminus); the interaction is increased upon CXCL12 stimulation and inhibits ITCH catalytic activity (the interaction is direct). Interacts with HGS. Interacts (via WW domains) with PCBP2 within a complex containing ITCH, MAVS and PCBP2. Interacts (via WW domains) with TXNIP (via C-terminus). Interacts with p15 BID. Interacts with ERBB4. Interacts with DTX1. Interacts with SPART. Interacts with SNX9 and SNX18. Interacts (via its WW domains) with ATN1. Interacts (via WW domains) with SGK3. Interacts with CBLC. Interacts with OTUD7B. Interacts (via WW domain 1,2 and 3) with PI4K2A; the interaction inhibits PI4K2A catalytic activity and promotes ITCH catalytic activity. Interacts with ARRDC4. Part of a complex containing ITCH, NDFIP1 and MAP3K7. Interacts with UBE2L3; the interaction is mediated by NDFIP1. Interacts with MAPK8/JNK1. Interacts (via WW domains) with ARRDC1 (via PPxY motifs); the interaction is direct and participates in the recruitment of the ubiquitin-protein ligase ITCH to the NOTCH1 receptor. Interacts (via WW domains) with ARRDC2. Interacts (via WW domains) with ARRDC3. Interacts directly with LDLRAD3; this interaction promotes ITCH auto-ubiquitination leading to its degradation. Interacts with ENTREP1; enhances the ubiquitination of CXCR4 by ITCH and its subsequent endocytosis. Interacts with USP12 and WDR48/UAF1; the interaction is more efficient when both USP12 and WDR48/UAF1 are involved and may facilitate the recruitment of the USP12 deubiquitinase complex to Notch. As to quaternary structure, (Microbial infection) Interacts with Epstein-Barr virus LMP2A. Post-translationally, on T-cell activation, phosphorylation by the JNK cascade on serine and threonine residues surrounding the PRR domain accelerates the ubiquitination and degradation of JUN and JUNB. The increased ITCH catalytic activity due to phosphorylation by JNK1 may occur due to a conformational change disrupting the interaction between the PRR/WW motifs domain and the HECT domain and, thus exposing the HECT domain. Phosphorylation by FYN reduces interaction with JUNB and negatively controls JUN ubiquitination and degradation. Interacts directly with LDLRAD3; this interaction promotes ITCH auto-ubiquitination leading to its degradation. In terms of processing, monoubiquitinated. Autopolyubiquitinated with 'Lys-63' linkages which does not lead to protein degradation. As to expression, detected in uterus (at protein level). Widely expressed.

The protein localises to the cell membrane. It localises to the cytoplasm. It is found in the nucleus. The protein resides in the early endosome membrane. Its subcellular location is the endosome membrane. It catalyses the reaction S-ubiquitinyl-[E2 ubiquitin-conjugating enzyme]-L-cysteine + [acceptor protein]-L-lysine = [E2 ubiquitin-conjugating enzyme]-L-cysteine + N(6)-ubiquitinyl-[acceptor protein]-L-lysine.. It functions in the pathway protein modification; protein ubiquitination. Its activity is regulated as follows. Activated by NDFIP1- and NDFIP2-binding. Activated by PI4K2A-binding. Inhibited by DTX3L-binding. Inhibited by N4BP1 binding. Its function is as follows. Acts as an E3 ubiquitin-protein ligase which accepts ubiquitin from an E2 ubiquitin-conjugating enzyme in the form of a thioester and then directly transfers the ubiquitin to targeted substrates. It catalyzes 'Lys-29'-, 'Lys-48'- and 'Lys-63'-linked ubiquitin conjugation. Involved in the control of inflammatory signaling pathways. Is an essential component of a ubiquitin-editing protein complex, comprising also TNFAIP3, TAX1BP1 and RNF11, that ensures the transient nature of inflammatory signaling pathways. Promotes the association of the complex after TNF stimulation. Once the complex is formed, TNFAIP3 deubiquitinates 'Lys-63' polyubiquitin chains on RIPK1 and catalyzes the formation of 'Lys-48'-polyubiquitin chains. This leads to RIPK1 proteasomal degradation and consequently termination of the TNF- or LPS-mediated activation of NFKB1. Ubiquitinates RIPK2 by 'Lys-63'-linked conjugation and influences NOD2-dependent signal transduction pathways. Regulates the transcriptional activity of several transcription factors involved in immune response. Ubiquitinates NFE2 by 'Lys-63' linkages and is implicated in the control of the development of hematopoietic lineages. Mediates JUN ubiquitination and degradation. Mediates JUNB ubiquitination and degradation. Critical regulator of type 2 helper T (Th2) cell cytokine production by inducing JUNB ubiquitination and degradation. Involved in the negative regulation of MAVS-dependent cellular antiviral responses. Ubiquitinates MAVS through 'Lys-48'-linked conjugation resulting in MAVS proteasomal degradation. Following ligand stimulation, regulates sorting of Wnt receptor FZD4 to the degradative endocytic pathway probably by modulating PI42KA activity. Ubiquitinates PI4K2A and negatively regulates its catalytic activity. Ubiquitinates chemokine receptor CXCR4 and regulates sorting of CXCR4 to the degradative endocytic pathway following ligand stimulation by ubiquitinating endosomal sorting complex required for transport ESCRT-0 components HGS and STAM. Targets DTX1 for lysosomal degradation and controls NOTCH1 degradation, in the absence of ligand, through 'Lys-29'-linked polyubiquitination. Ubiquitinates SNX9. Ubiquitinates MAP3K7 through 'Lys-48'-linked conjugation. Together with UBR5, involved in the regulation of apoptosis and reactive oxygen species levels through the ubiquitination and proteasomal degradation of TXNIP: catalyzes 'Lys-48'-/'Lys-63'-branched ubiquitination of TXNIP. ITCH synthesizes 'Lys-63'-linked chains, while UBR5 is branching multiple 'Lys-48'-linked chains of substrate initially modified. Mediates the antiapoptotic activity of epidermal growth factor through the ubiquitination and proteasomal degradation of p15 BID. Ubiquitinates BRAT1 and this ubiquitination is enhanced in the presence of NDFIP1. Ubiquitinates NEDD9/HEF1, resulting in proteasomal degradation of NEDD9/HEF1. The sequence is that of E3 ubiquitin-protein ligase Itchy (Itch) from Mus musculus (Mouse).